The primary structure comprises 209 residues: NADH-ubiquinone oxidoreductase subunit 9 (209 aa).

The protein belongs to the complex I 30 kDa subunit family. In terms of assembly, complex I is composed of about 30 different subunits.

Its subcellular location is the mitochondrion inner membrane. The enzyme catalyses a ubiquinone + NADH + 5 H(+)(in) = a ubiquinol + NAD(+) + 4 H(+)(out). Its function is as follows. Core subunit of the mitochondrial membrane respiratory chain NADH dehydrogenase (Complex I) that is believed to belong to the minimal assembly required for catalysis. Complex I functions in the transfer of electrons from NADH to the respiratory chain. The immediate electron acceptor for the enzyme is believed to be ubiquinone. This Dictyostelium citrinum (Slime mold) protein is NADH-ubiquinone oxidoreductase subunit 9 (nad9).